A 247-amino-acid polypeptide reads, in one-letter code: Ribosomal RNA small subunit methyltransferase J (247 aa).

S-adenosyl-L-methionine is bound by residues Arg106–Asp107, Glu122–Arg123, and Asp168.

This sequence belongs to the methyltransferase superfamily. RsmJ family.

Its subcellular location is the cytoplasm. It catalyses the reaction guanosine(1516) in 16S rRNA + S-adenosyl-L-methionine = N(2)-methylguanosine(1516) in 16S rRNA + S-adenosyl-L-homocysteine + H(+). Functionally, specifically methylates the guanosine in position 1516 of 16S rRNA. The polypeptide is Ribosomal RNA small subunit methyltransferase J (Alcanivorax borkumensis (strain ATCC 700651 / DSM 11573 / NCIMB 13689 / SK2)).